The primary structure comprises 320 residues: Mitochondrial thiamine pyrophosphate carrier 1 (320 aa).

Solcar repeat units follow at residues 12–110, 119–205, and 213–308; these read GTRR…TTQA, PQPV…LRPS, and PFGS…TLRA. Transmembrane regions (helical) follow at residues 17-35, 91-107, 125-145, 180-197, 219-239, and 283-300; these read VVLA…VAPL, LMYV…YRTT, FVAG…LDLL, GCSA…LFFA, ALAG…LDLV, and GLTV…VTMW.

Belongs to the mitochondrial carrier (TC 2.A.29) family.

It is found in the mitochondrion inner membrane. Functionally, mitochondrial transporter that mediates uptake of thiamine pyrophosphate (ThPP) into mitochondria. This is Mitochondrial thiamine pyrophosphate carrier 1 (tpc1) from Aspergillus terreus (strain NIH 2624 / FGSC A1156).